The following is a 499-amino-acid chain: UPF0159 protein Ta1429 (499 aa).

2 consecutive ThyX domains span residues methionine 1–glutamine 246 and glutamate 271–valine 476.

The protein belongs to the UPF0159 family.

This chain is UPF0159 protein Ta1429, found in Thermoplasma acidophilum (strain ATCC 25905 / DSM 1728 / JCM 9062 / NBRC 15155 / AMRC-C165).